The chain runs to 1704 residues: Phospholipid-transporting ATPase ABCA3 (1704 aa).

Residue N14 is glycosylated (N-linked (GlcNAc...) asparagine). A helical transmembrane segment spans residues 22–42 (VLVTVLELFLPLLFSGILIWL). 4 N-linked (GlcNAc...) asparagine glycosylation sites follow: N53, N124, N140, and N228. The next 5 helical transmembrane spans lie at 251 to 271 (ISDP…MLSF), 307 to 327 (AWFL…TLLF), 344 to 364 (SLVL…SFMV), 373 to 393 (MAAT…FFVA), and 405 to 425 (LLSC…IGKF). Residues 530 to 763 (IKIKHLSKVF…YGAGYHMTLV (234 aa)) form the ABC transporter 1 domain. ATP is bound at residue 566 to 573 (GHNGAGKT). Residues N620 and N945 are each glycosylated (N-linked (GlcNAc...) asparagine). 6 consecutive transmembrane segments (helical) span residues 1100-1120 (IALN…ILAV), 1144-1164 (SALL…LVVF), 1183-1203 (LLLM…SFFF), 1213-1233 (LTIF…IMRI), 1245-1265 (LDHV…SNFY), and 1310-1330 (MAAS…NLLW). An N-linked (GlcNAc...) asparagine glycan is attached at N1350. One can recognise an ABC transporter 2 domain in the interval 1381–1614 (LIINELSKVY…FGSGYSLQAK (234 aa)). Residue 1416-1423 (GFNGAGKT) coordinates ATP.

In terms of assembly, homooligomer; disulfide-linked. In terms of processing, N-glycosylated. Localization at intracellular vesicles is accompanied by processing of oligosaccharide from high mannose type to complex type. N-linked glycosylation at Asn-124 and Asn-140 is required for stability and efficient anterograde trafficking and prevents from proteasomal degradation. Post-translationally, proteolytically cleaved by CTSL and to a lower extent by CTSB within multivesicular bodies (MVB) and lamellar bodies (LB) leading to a mature form of 150 kDa. Highly expressed in lung, moderately expressed in stomach, intestine, and kidney and weakly expressed in thyroid, brain, liver, spleen, heart, testis, and thymus.

Its subcellular location is the endosome. It localises to the multivesicular body membrane. The protein resides in the cytoplasmic vesicle membrane. It is found in the late endosome membrane. The protein localises to the lysosome membrane. The enzyme catalyses ATP + H2O + xenobioticSide 1 = ADP + phosphate + xenobioticSide 2.. The catalysed reaction is a 1,2-diacyl-sn-glycero-3-phosphocholine(in) + ATP + H2O = a 1,2-diacyl-sn-glycero-3-phosphocholine(out) + ADP + phosphate + H(+). It catalyses the reaction ATP + H2O + phospholipidSide 1 = ADP + phosphate + phospholipidSide 2.. It carries out the reaction 1,2-dihexadecanoyl-sn-glycero-3-phosphocholine(in) + ATP + H2O = 1,2-dihexadecanoyl-sn-glycero-3-phosphocholine(out) + ADP + phosphate + H(+). The enzyme catalyses cholesterol(in) + ATP + H2O = cholesterol(out) + ADP + phosphate + H(+). The catalysed reaction is a 1,2-diacyl-sn-glycero-3-phospho-(1'-sn-glycerol)(in) + ATP + H2O = a 1,2-diacyl-sn-glycero-3-phospho-(1'-sn-glycerol)(out) + ADP + phosphate + H(+). Functionally, catalyzes the ATP-dependent transport of phospholipids such as phosphatidylcholine and phosphoglycerol from the cytoplasm into the lumen side of lamellar bodies, in turn participates in the lamellar bodies biogenesis and homeostasis of pulmonary surfactant. Transports preferentially phosphatidylcholine containing short acyl chains. In addition plays a role as an efflux transporter of miltefosine across macrophage membranes and free cholesterol (FC) through intralumenal vesicles by removing FC from the cell as a component of surfactant and protects cells from free cholesterol toxicity. The sequence is that of Phospholipid-transporting ATPase ABCA3 from Rattus norvegicus (Rat).